The following is a 793-amino-acid chain: Probable phosphoketolase (793 aa).

Belongs to the XFP family. Thiamine diphosphate serves as cofactor.

The chain is Probable phosphoketolase from Streptomyces avermitilis (strain ATCC 31267 / DSM 46492 / JCM 5070 / NBRC 14893 / NCIMB 12804 / NRRL 8165 / MA-4680).